Reading from the N-terminus, the 197-residue chain is Lymphotoxin-alpha (197 aa).

The N-terminal stretch at 1-26 (MTPPGRLYLPLLLGLLLAPPPPGAQG) is a signal peptide. Positions 55–197 (PAAHLVGDPS…SSVFFGAFAL (143 aa)) constitute a THD domain. A glycan (N-linked (GlcNAc...) asparagine) is linked at asparagine 88. A disulfide bond links cysteine 112 and cysteine 148.

Belongs to the tumor necrosis factor family. Homotrimer, and heterotrimer of either two LTB and one LTA subunits or (less prevalent) two LTA and one LTB subunits. Interacts with TNFRSF14.

The protein resides in the secreted. It localises to the membrane. Cytokine that in its homotrimeric form binds to TNFRSF1A/TNFR1, TNFRSF1B/TNFBR and TNFRSF14/HVEM. In its heterotrimeric form with LTB binds to TNFRSF3/LTBR. Lymphotoxin is produced by lymphocytes and is cytotoxic for a wide range of tumor cells in vitro and in vivo. The sequence is that of Lymphotoxin-alpha (LTA) from Oryctolagus cuniculus (Rabbit).